A 375-amino-acid chain; its full sequence is Tyrosine--tRNA ligase (375 aa).

Residues Y37, Y168, Q172, D175, and Q190 each contribute to the L-tyrosine site. The short motif at 251–255 is the 'KMSKS' region element; it reads KMSKS. K254 is an ATP binding site.

This sequence belongs to the class-I aminoacyl-tRNA synthetase family. TyrS type 4 subfamily. Homodimer.

Its subcellular location is the cytoplasm. The enzyme catalyses tRNA(Tyr) + L-tyrosine + ATP = L-tyrosyl-tRNA(Tyr) + AMP + diphosphate + H(+). In terms of biological role, catalyzes the attachment of tyrosine to tRNA(Tyr) in a two-step reaction: tyrosine is first activated by ATP to form Tyr-AMP and then transferred to the acceptor end of tRNA(Tyr). The polypeptide is Tyrosine--tRNA ligase (Pyrococcus horikoshii (strain ATCC 700860 / DSM 12428 / JCM 9974 / NBRC 100139 / OT-3)).